Here is a 457-residue protein sequence, read N- to C-terminus: 5' exonuclease Apollo (457 aa).

Residues 425-437 (ELPKQYLLTPLNA) carry the TBM motif.

The protein belongs to the DNA repair metallo-beta-lactamase (DRMBL) family. In terms of assembly, interacts with TERF2; the interaction is direct.

The protein resides in the chromosome. Its subcellular location is the telomere. It localises to the nucleus. The enzyme catalyses a beta-lactam + H2O = a substituted beta-amino acid. 5'-3' exonuclease that plays a central role in telomere maintenance and protection during S-phase. Participates in the protection of telomeres against non-homologous end-joining (NHEJ)-mediated repair, thereby ensuring that telomeres do not fuse. Plays a key role in telomeric loop (T loop) formation by being recruited by TERF2 at the leading end telomeres and by processing leading-end telomeres immediately after their replication via its exonuclease activity: generates 3' single-stranded overhang at the leading end telomeres avoiding blunt leading-end telomeres that are vulnerable to end-joining reactions and expose the telomere end in a manner that activates the DNA repair pathways. May be required for DNA interstrand cross-link repair. Possesses beta-lactamase activity, catalyzing the hydrolysis of penicillin G and nitrocefin. Exhibits no activity towards other beta-lactam antibiotic classes including cephalosporins (cefotaxime) and carbapenems (imipenem). This Gallus gallus (Chicken) protein is 5' exonuclease Apollo (DCLRE1B).